Consider the following 518-residue polypeptide: Glutamate--cysteine ligase (518 aa).

It belongs to the glutamate--cysteine ligase type 1 family. Type 1 subfamily.

It carries out the reaction L-cysteine + L-glutamate + ATP = gamma-L-glutamyl-L-cysteine + ADP + phosphate + H(+). It participates in sulfur metabolism; glutathione biosynthesis; glutathione from L-cysteine and L-glutamate: step 1/2. The protein is Glutamate--cysteine ligase of Buchnera aphidicola subsp. Acyrthosiphon pisum (strain 5A).